Consider the following 335-residue polypeptide: Glucose-dependent insulinotropic receptor (335 aa).

The Extracellular segment spans residues 1-12; it reads MESSFSFGVILA. A helical membrane pass occupies residues 13–33; sequence VLASLIIATNTLVAVAVLLLI. Over 34–37 the chain is Cytoplasmic; the sequence is HKND. The helical transmembrane segment at 38–58 threads the bilayer; the sequence is GVSLCFTLNLAVADTLIGVAI. At 59 to 81 the chain is on the extracellular side; the sequence is SGLLTDQLSSPSRPTQKTLCSLR. Residues 82-102 form a helical membrane-spanning segment; the sequence is MAFVTSSAAASVLTVMLITFD. Residues 103–125 are Cytoplasmic-facing; it reads RYLAIKQPFRYLKIMSGFVAGAC. The chain crosses the membrane as a helical span at residues 126-146; the sequence is IAGLWLVSYLIGFLPLGIPMF. Residues 147-164 are Extracellular-facing; the sequence is QQTAYKGQCSFFAVFHPH. The helical transmembrane segment at 165–185 threads the bilayer; that stretch reads FVLTLSCVGFFPAMLLFVFFY. Over 186–226 the chain is Cytoplasmic; that stretch reads CDMLKIASMHSQQIRKMEHAGAMAGGYRSPRTPSDFKALRT. The chain crosses the membrane as a helical span at residues 227 to 247; sequence VSVLIGSFALSWTPFLITGIV. At 248 to 262 the chain is on the extracellular side; sequence QVACQECHLYLVLER. The helical transmembrane segment at 263 to 283 threads the bilayer; that stretch reads YLWLLGVGNSLLNPLIYAYWQ. The Cytoplasmic segment spans residues 284–335; the sequence is KEVRLQLYHMALGVKKVLTSFLLFLSARNCGPERPRESSCHIVTISSSEFDG.

It belongs to the G-protein coupled receptor 1 family. Predominantly expressed in the pancreas, especially in the islets.

The protein localises to the cell membrane. Its function is as follows. Receptor for the endogenous fatty-acid ethanolamide oleoylethanolamide (OEA) and lysophosphatidylcholine (LPC). Functions as a glucose-dependent insulinotropic receptor. The activity of this receptor is mediated by G proteins which activate adenylate cyclase. Seems to act through a G(s) mediated pathway. This Homo sapiens (Human) protein is Glucose-dependent insulinotropic receptor (GPR119).